A 69-amino-acid chain; its full sequence is Regulatory protein MokC (69 aa).

Residues 24-44 (KAMIVALIVICITAVVAALVT) traverse the membrane as a helical segment.

Belongs to the Hok/Gef family.

The protein localises to the cell inner membrane. Might be the toxic component of a type I toxin-antitoxin (TA) system. Regulatory peptide which completely overlaps hokC and enables hokC expression. The sequence is that of Regulatory protein MokC (mokC) from Escherichia coli (strain K12).